The sequence spans 277 residues: Large ribosomal subunit protein uL2 (277 aa).

Residues 222 to 277 are disordered; sequence GVAMNPVDHPHGGGEGRTSGGRHPVSPWGKPTKGKRTRSNKATDKFIMRTRHQRKK.

Belongs to the universal ribosomal protein uL2 family. As to quaternary structure, part of the 50S ribosomal subunit. Forms a bridge to the 30S subunit in the 70S ribosome.

Its function is as follows. One of the primary rRNA binding proteins. Required for association of the 30S and 50S subunits to form the 70S ribosome, for tRNA binding and peptide bond formation. It has been suggested to have peptidyltransferase activity; this is somewhat controversial. Makes several contacts with the 16S rRNA in the 70S ribosome. This Bartonella henselae (strain ATCC 49882 / DSM 28221 / CCUG 30454 / Houston 1) (Rochalimaea henselae) protein is Large ribosomal subunit protein uL2.